Reading from the N-terminus, the 434-residue chain is Ribosomal protein uS12 methylthiotransferase RimO (434 aa).

The MTTase N-terminal domain maps to 2 to 112 (AKIGFVSLGC…VLEAVQVVLP (111 aa)). The [4Fe-4S] cluster site is built by Cys-11, Cys-47, Cys-76, Cys-142, Cys-146, and Cys-149. A Radical SAM core domain is found at 128–365 (LTPRHYAYVK…LELQARVSLR (238 aa)). The 67-residue stretch at 368 to 434 (QRFVGKTLEV…DTYDLHGVQA (67 aa)) folds into the TRAM domain.

Belongs to the methylthiotransferase family. RimO subfamily. [4Fe-4S] cluster serves as cofactor.

The protein localises to the cytoplasm. The enzyme catalyses L-aspartate(89)-[ribosomal protein uS12]-hydrogen + (sulfur carrier)-SH + AH2 + 2 S-adenosyl-L-methionine = 3-methylsulfanyl-L-aspartate(89)-[ribosomal protein uS12]-hydrogen + (sulfur carrier)-H + 5'-deoxyadenosine + L-methionine + A + S-adenosyl-L-homocysteine + 2 H(+). Catalyzes the methylthiolation of an aspartic acid residue of ribosomal protein uS12. The polypeptide is Ribosomal protein uS12 methylthiotransferase RimO (Thermus thermophilus (strain ATCC 27634 / DSM 579 / HB8)).